A 413-amino-acid chain; its full sequence is Arogenate dehydratase/prephenate dehydratase 6, chloroplastic (413 aa).

Residues 1-44 (MKALSSSSPILGASQPATATALIARSGRSEWQSSCAILTSKVIS) constitute a chloroplast transit peptide. The 178-residue stretch at 117–294 (RVAYQGVPGA…NVTRFVMLAR (178 aa)) folds into the Prephenate dehydratase domain. The ACT domain occupies 308–399 (SIVFAHEKGT…SFLRVLGSYP (92 aa)).

As to expression, expressed in roots, leaves, stems, flowers and siliques.

The protein resides in the plastid. It is found in the chloroplast stroma. The enzyme catalyses L-arogenate + H(+) = L-phenylalanine + CO2 + H2O. The catalysed reaction is prephenate + H(+) = 3-phenylpyruvate + CO2 + H2O. It functions in the pathway amino-acid biosynthesis; L-phenylalanine biosynthesis; L-phenylalanine from L-arogenate: step 1/1. Its pathway is amino-acid biosynthesis; L-phenylalanine biosynthesis; phenylpyruvate from prephenate: step 1/1. Its function is as follows. Converts the prephenate produced from the shikimate-chorismate pathway into phenylalanine. Dehydratase that uses arogenate and prephenate as substrates. Utilzes more efficiently arogenate than prephenate. The protein is Arogenate dehydratase/prephenate dehydratase 6, chloroplastic of Arabidopsis thaliana (Mouse-ear cress).